A 498-amino-acid polypeptide reads, in one-letter code: MGFVNTLTQASDQENQRLRASPQVFKLFVLILFVLLVLKIRRHRANRITNQYGRQICELHGDARVAKFAFSKQLSDQGKALAGDEPFIIRNGRARELVVTKPEHIYDFYKGDTKPCSLLGHAVGALAGERWSMIRRYFDPAFSFQSARQAIPELSASIDRWLDDLPLQGTGTGKGFALEIKKPCRFLPLRLAAEFVYGEIFDDKLFSALLDLNVLHEVILHDVIANKRLATRLGCWFDRAAAKRMEEFRSRWMEFNLGIIQSARGASKACPAERIYHGVEKGDLKLEEFLHTLDEILFANVDVSSAVLGTLFEHLAVNTAFQQKLRAEIETHIQTRTHTPDTDSDIDINTETGKYLSKQDTLMNFAVMEAMRLSPAFDCDFAAFSLPECTAVPKEIGGYRVPARCPVVIDAKRLNADRATWGKDGDTYRPERFRDIPPSKSRYGFMRFGVGAASGRCLGKHLADTLFKLTLIAVIERYSLHSVHDGPEVELREVVVRV.

Residues 20–40 (ASPQVFKLFVLILFVLLVLKI) traverse the membrane as a helical segment. Position 457 (C457) interacts with heme.

The protein belongs to the cytochrome P450 family. The cofactor is heme.

It localises to the membrane. It participates in secondary metabolite biosynthesis. Cytochrome P450 monooxygenase; part of the gene cluster that mediates the biosynthesis of aspyridones. The polyketide-amino acid backbone preaspyridone A is first assembled by the PKS-NRPS hybrid apdA. The assembly of preaspyridone A is initiated by loading of malonyl-CoA onto apdA, followed by decarboxylation to yield the acetyl starter unit. The growing polyketide chain then elongates into a tetraketide. The adpA PKS module catalyzes three Claisen condensations, as well as beta-keto processing and methylation. Alpha-methylation step during polyketide synthesis is a prerequisite and a key checkpoint for chain transfer between PKS and NRPS modules. The downstream NRPS module contains the condensation (C), adenylation (A), and thiolation (T) domains and catalyzes the incorporation of tyrosine via the formation of the L-tyrosinyl-thioester and the amide linkage between L-tyrosinyl-thioester and the tetraketide. The bimodular assembly line is terminated with a reductase (R) domain that facilitates formation and release of the tetramic acid product. Because apdA lacks a designated enoylreductase (ER) domain, the required activity is provided the enoyl reductase apdC. ApdC appears to operate with different stereoselectivity in different PKS cycle. Combined with apdC, apdA is proposed to synthesize preaspyridone A via about 20 enzymatic steps. A number of oxidative steps performed successively by the cytochrome P450 monooxygenases apdE and apdB are required for the conversion of preaspyridone A to aspyridone A. The cytochrome P450 monooxygenase apdE is responsible for the oxidative dephenylation of preaspyridone A. Finally, the predicted FAD-dependent monooxygenase apdD and the acyl-CoA dehydrogenase apdG may be involved in the transformation of aspyridone A into aspyridone B. In Emericella nidulans (strain FGSC A4 / ATCC 38163 / CBS 112.46 / NRRL 194 / M139) (Aspergillus nidulans), this protein is Cytochrome P450 monooxygenase apdB.